The following is a 388-amino-acid chain: Single-stranded DNA-binding protein 3 (388 aa).

An N-acetylmethionine modification is found at Met1. The region spanning 16–48 (AREKLALYVYEYLLHVGAQKSAQTFLSEIRWEK) is the LisH domain. The tract at residues 101–388 (VLGNIPPNDG…NYSPSMTMSV (288 aa)) is disordered. The segment covering 126–139 (GSQPSPHAQPPPHN) has biased composition (pro residues). Residues Arg155, Arg161, and Arg165 each carry the asymmetric dimethylarginine modification. Low complexity-rich tracts occupy residues 200-209 (MQRMNPPRGM) and 250-268 (PNSA…TYVG). Over residues 272 to 282 (GGGPPGTPIMP) the composition is skewed to pro residues. Residues 285–296 (ADSTNSSDNIYT) are compositionally biased toward polar residues. Gly residues predominate over residues 315 to 325 (GSDGPMGGMGG). The span at 346 to 357 (NSPNNISGISNP) shows a compositional bias: low complexity. Phosphoserine is present on residues Ser347, Ser352, and Ser355. Thr360 is modified (phosphothreonine). Polar residues predominate over residues 373–388 (HSFQNDNYSPSMTMSV). Ser381 and Ser387 each carry phosphoserine.

As to expression, highly expressed in all hematopoietic tissues, including spleen, lymph node, peripheral blood, bone marrow, thymus, and fetal liver, with highest expression in thymus and fetal liver. Expression is also high in heart, brain, kidney, and skeletal muscle.

The protein resides in the nucleus. Functionally, may be involved in transcription regulation of the alpha 2(I) collagen gene where it binds to the single-stranded polypyrimidine sequences in the promoter region. This is Single-stranded DNA-binding protein 3 (SSBP3) from Homo sapiens (Human).